A 216-amino-acid chain; its full sequence is ATP-dependent Clp protease proteolytic subunit (216 aa).

Residue Ser101 is the Nucleophile of the active site. His126 is a catalytic residue.

Belongs to the peptidase S14 family. In terms of assembly, component of the chloroplastic Clp protease core complex.

The protein localises to the plastid. It is found in the chloroplast stroma. The catalysed reaction is Hydrolysis of proteins to small peptides in the presence of ATP and magnesium. alpha-casein is the usual test substrate. In the absence of ATP, only oligopeptides shorter than five residues are hydrolyzed (such as succinyl-Leu-Tyr-|-NHMec, and Leu-Tyr-Leu-|-Tyr-Trp, in which cleavage of the -Tyr-|-Leu- and -Tyr-|-Trp bonds also occurs).. Cleaves peptides in various proteins in a process that requires ATP hydrolysis. Has a chymotrypsin-like activity. Plays a major role in the degradation of misfolded proteins. This is ATP-dependent Clp protease proteolytic subunit from Triticum aestivum (Wheat).